The chain runs to 98 residues: Small ribosomal subunit protein bS20 (98 aa).

Belongs to the bacterial ribosomal protein bS20 family.

Its function is as follows. Binds directly to 16S ribosomal RNA. This chain is Small ribosomal subunit protein bS20, found in Synechococcus sp. (strain CC9902).